A 22-amino-acid chain; its full sequence is Probable ATP-dependent Clp protease proteolytic subunit (22 aa).

It belongs to the peptidase S14 family. In terms of assembly, component of the chloroplastic Clp protease core complex.

The catalysed reaction is Hydrolysis of proteins to small peptides in the presence of ATP and magnesium. alpha-casein is the usual test substrate. In the absence of ATP, only oligopeptides shorter than five residues are hydrolyzed (such as succinyl-Leu-Tyr-|-NHMec, and Leu-Tyr-Leu-|-Tyr-Trp, in which cleavage of the -Tyr-|-Leu- and -Tyr-|-Trp bonds also occurs).. Cleaves peptides in various proteins in a process that requires ATP hydrolysis. Has a chymotrypsin-like activity. Plays a major role in the degradation of misfolded proteins. The polypeptide is Probable ATP-dependent Clp protease proteolytic subunit (Populus euphratica (Euphrates poplar)).